Reading from the N-terminus, the 514-residue chain is MDEGMEISSEGNSLIKAVHQSRLRLTRLLLEGGAYINESNDRGETPLMIACKTKHVDHQSVSKAKMVKYLLENNADPNIQDKSGKTALMHACLEKAGPEVVSLLLKSGADLSLQDHSSYSALVYAINSEDTETLKVLLSACKAKGKEVIIITTAKLPCGKHTTKQYLNMPPVDIDGCHSPATCTTPSEIDIKTASSPLSHSSETELTLFGFKDLELAGSNDDTWDPGSPVRKPALAPKGPKLPHAPPWVKSPPLLMHQNRVASLQEELQDITPEEELSYKTNGLALSKRFITRHQSIDVKDTAHLLRAFDQASSRKMSYDEINCQSYLSEGNQQCIEVPVDQDPDSNQTIFASTLRSIVQKRNLGANHYSSDSQLSAGLTPPTSEDGKALIGKKKILSPSPSQLSESKELLENIPPGPLSRRNHAVLERRGSGAFPLDHSVTQTRQGFLPPLNVNSHPPISDINVNNKICSLLSCGQKVLMPTVPIFPKEFKSKKMLLRRQSLQTEQIKQLVNF.

ANK repeat units lie at residues 9–38, 42–79, 83–113, and 117–146; these read SEGN…YINE, RGET…DPNI, SGKT…DLSL, and SSYS…AKGK. The interval 220–249 is disordered; it reads NDDTWDPGSPVRKPALAPKGPKLPHAPPWV. Residue Ser263 is modified to Phosphoserine. Thr272 is modified (phosphothreonine). Ser296 carries the post-translational modification Phosphoserine.

Belongs to the ANKRD34 family. In terms of processing, phosphorylated.

It is found in the cytoplasm. The protein resides in the nucleus. The protein is Ankyrin repeat domain-containing protein 34B (ANKRD34B) of Homo sapiens (Human).